The sequence spans 750 residues: GTP pyrophosphokinase rsh (750 aa).

The HD domain maps to 45 to 144; the sequence is YFSHPLEVAA…VKLADRLHNM (100 aa). In terms of domain architecture, TGS spans 390–451; sequence DQVFCFTPKG…KNGDEVDIIR (62 aa). Residues 587–613 form a disordered region; sequence AAKVDPAATTPKPGKRALPIRGTNPDL. The ACT domain occupies 676-750; the sequence is RISVSAINSP…SVSSAKRVNG (75 aa).

The protein belongs to the RelA/SpoT family.

It carries out the reaction GTP + ATP = guanosine 3'-diphosphate 5'-triphosphate + AMP. Functions as a (p)ppGpp synthase. In eubacteria ppGpp (guanosine 3'-diphosphate 5'-diphosphate) is a mediator of the stringent response that coordinates a variety of cellular activities in response to changes in nutritional abundance. It is necessary for persistence in mice, essential for intracellular growth of Brucella and required for expression of the type IV secretion system VirB and therefore plays a role in adaptation of Brucella to its intracellular host environment. This is GTP pyrophosphokinase rsh (rsh) from Brucella melitensis biotype 1 (strain ATCC 23456 / CCUG 17765 / NCTC 10094 / 16M).